A 417-amino-acid chain; its full sequence is UDP-N-acetylglucosamine 1-carboxyvinyltransferase (417 aa).

Residue 22-23 (KN) coordinates phosphoenolpyruvate. A UDP-N-acetyl-alpha-D-glucosamine-binding site is contributed by arginine 92. Cysteine 116 serves as the catalytic Proton donor. Cysteine 116 bears the 2-(S-cysteinyl)pyruvic acid O-phosphothioketal mark. Aspartate 304 and isoleucine 326 together coordinate UDP-N-acetyl-alpha-D-glucosamine.

Belongs to the EPSP synthase family. MurA subfamily.

The protein localises to the cytoplasm. The enzyme catalyses phosphoenolpyruvate + UDP-N-acetyl-alpha-D-glucosamine = UDP-N-acetyl-3-O-(1-carboxyvinyl)-alpha-D-glucosamine + phosphate. It participates in cell wall biogenesis; peptidoglycan biosynthesis. In terms of biological role, cell wall formation. Adds enolpyruvyl to UDP-N-acetylglucosamine. This is UDP-N-acetylglucosamine 1-carboxyvinyltransferase from Geotalea uraniireducens (strain Rf4) (Geobacter uraniireducens).